Consider the following 1366-residue polypeptide: DNA-directed RNA polymerase subunit beta' (1366 aa).

A compositionally biased stretch (basic residues) spans 1 to 23; it reads MTSSKPKKSSRVRKTSKNSKKNN. A disordered region spans residues 1–25; that stretch reads MTSSKPKKSSRVRKTSKNSKKNNKI. Zn(2+)-binding residues include Cys-248, Cys-315, Cys-322, and Cys-325. Residues 1290–1366 are disordered; sequence DYTVDMPQSP…LQEEGLLSDE (77 aa). The segment covering 1295–1305 has biased composition (polar residues); sequence MPQSPTVSSTA. Residues 1354-1366 are compositionally biased toward low complexity; sequence LEGLQEEGLLSDE.

It belongs to the RNA polymerase beta' chain family. RpoC2 subfamily. In cyanobacteria the RNAP catalytic core is composed of 2 alpha, 1 beta, 1 beta', 1 gamma and 1 omega subunit. When a sigma factor is associated with the core the holoenzyme is formed, which can initiate transcription. Zn(2+) serves as cofactor.

The enzyme catalyses RNA(n) + a ribonucleoside 5'-triphosphate = RNA(n+1) + diphosphate. Its function is as follows. DNA-dependent RNA polymerase catalyzes the transcription of DNA into RNA using the four ribonucleoside triphosphates as substrates. The protein is DNA-directed RNA polymerase subunit beta' of Prochlorococcus marinus (strain MIT 9515).